The sequence spans 20 residues: Pregnancy-associated glycoprotein 60H (20 aa).

Asn4 is a glycosylation site (N-linked (GlcNAc...) asparagine).

It belongs to the peptidase A1 family. In terms of tissue distribution, chorionic epithelium (trophectoderm) and placental cotyledons.

Its subcellular location is the secreted. The protein resides in the extracellular space. This chain is Pregnancy-associated glycoprotein 60H, found in Bison bonasus (European bison).